Consider the following 222-residue polypeptide: V-type ATP synthase subunit D (222 aa).

This sequence belongs to the V-ATPase D subunit family.

Produces ATP from ADP in the presence of a proton gradient across the membrane. In Clostridioides difficile (strain 630) (Peptoclostridium difficile), this protein is V-type ATP synthase subunit D.